The sequence spans 67 residues: Ceratotoxin-C (67 aa).

Positions 1–23 (MANIKAVFLICIVAFIAFHCVVA) are cleaved as a signal peptide. Residues 24–35 (EPTAEDSVVVKR) constitute a propeptide that is removed on maturation.

In terms of assembly, homomer of four to six subunits.

The protein localises to the secreted. Its function is as follows. Female-specific peptides with potent activity against Gram-positive and Gram-negative bacteria. They have as well hemolytic activity. The protein is Ceratotoxin-C (CTXC1) of Ceratitis capitata (Mediterranean fruit fly).